A 157-amino-acid polypeptide reads, in one-letter code: Small ribosomal subunit protein uS7 (157 aa).

It belongs to the universal ribosomal protein uS7 family. Part of the 30S ribosomal subunit. Contacts proteins S9 and S11.

In terms of biological role, one of the primary rRNA binding proteins, it binds directly to 16S rRNA where it nucleates assembly of the head domain of the 30S subunit. Is located at the subunit interface close to the decoding center, probably blocks exit of the E-site tRNA. In Albidiferax ferrireducens (strain ATCC BAA-621 / DSM 15236 / T118) (Rhodoferax ferrireducens), this protein is Small ribosomal subunit protein uS7.